Reading from the N-terminus, the 369-residue chain is 3,7-dimethylxanthine N-methyltransferase TCS1 (369 aa).

Tyr-24 is an S-adenosyl-L-homocysteine binding site. Caffeine is bound at residue Thr-31. S-adenosyl-L-homocysteine-binding residues include Cys-66, Asn-71, Asp-103, Leu-104, Ser-138, and Phe-139. Residues Tyr-156, His-159, and Trp-160 each contribute to the caffeine site. Mg(2+) is bound at residue Asn-177. Arg-225 contacts caffeine. Mg(2+) contacts are provided by Asp-263, Phe-265, and Asn-266. A caffeine-binding site is contributed by Phe-321.

Belongs to the methyltransferase superfamily. Type-7 methyltransferase family. The cofactor is Mg(2+).

It catalyses the reaction 1,7-dimethylxanthine + S-adenosyl-L-methionine = caffeine + S-adenosyl-L-homocysteine + H(+). It carries out the reaction theobromine + S-adenosyl-L-methionine = caffeine + S-adenosyl-L-homocysteine + H(+). The catalysed reaction is 7-methylxanthine + S-adenosyl-L-methionine = theobromine + S-adenosyl-L-homocysteine + H(+). It participates in alkaloid biosynthesis. Its function is as follows. Involved in the biosynthesis of caffeine in cv. Puer. Involved in the biosynthesis of theacrine in cv. Kucha, a caffeine-like xanthine alkaloid with diverse beneficial biological activities including anti-depressive, sedative, and hypnotic activities, improving learning and memory, increasing exercise activity, and preventing nonalcoholic fatty liver disease. Catalyzes the conversion of 7-methylxanthine (7mX) to theobromine and of theobromine to caffeine. Has 3-N- and 1-N-methylation activity. The protein is 3,7-dimethylxanthine N-methyltransferase TCS1 of Camellia sinensis var. assamica (Assam tea).